The chain runs to 156 residues: Rhodanese-like domain-containing protein 17 (156 aa).

The region spanning 44-146 is the Rhodanese domain; the sequence is LDSGYTFLDV…WVNKRFPVKV (103 aa). Cys106 acts as the Cysteine persulfide intermediate in catalysis.

In Arabidopsis thaliana (Mouse-ear cress), this protein is Rhodanese-like domain-containing protein 17 (STR17).